A 485-amino-acid chain; its full sequence is Pup--protein ligase (485 aa).

Glutamate 33 provides a ligand contact to Mg(2+). Arginine 76 is an ATP binding site. Residue tyrosine 78 coordinates Mg(2+). Aspartate 80 acts as the Proton acceptor in catalysis. Residue glutamate 86 participates in Mg(2+) binding. 2 residues coordinate ATP: threonine 89 and tryptophan 451.

This sequence belongs to the Pup ligase/Pup deamidase family. Pup-conjugating enzyme subfamily.

The catalysed reaction is ATP + [prokaryotic ubiquitin-like protein]-L-glutamate + [protein]-L-lysine = ADP + phosphate + N(6)-([prokaryotic ubiquitin-like protein]-gamma-L-glutamyl)-[protein]-L-lysine.. It functions in the pathway protein degradation; proteasomal Pup-dependent pathway. Its pathway is protein modification; protein pupylation. In terms of biological role, catalyzes the covalent attachment of the prokaryotic ubiquitin-like protein modifier Pup to the proteasomal substrate proteins, thereby targeting them for proteasomal degradation. This tagging system is termed pupylation. The ligation reaction involves the side-chain carboxylate of the C-terminal glutamate of Pup and the side-chain amino group of a substrate lysine. The sequence is that of Pup--protein ligase from Bifidobacterium longum subsp. infantis (strain ATCC 15697 / DSM 20088 / JCM 1222 / NCTC 11817 / S12).